The primary structure comprises 1512 residues: DNA polymerase (1512 aa).

It belongs to the DNA polymerase type-B family.

It is found in the host nucleus. The catalysed reaction is DNA(n) + a 2'-deoxyribonucleoside 5'-triphosphate = DNA(n+1) + diphosphate. This Ictalurid herpesvirus 1 (strain Auburn) (IcHV-1) protein is DNA polymerase (57/58).